The chain runs to 448 residues: MTRKYFGTDGVRGKVGVSPITPDFVMRLGYAAGSVLTKFETTKTPGSRPTVLIGKDTRISGYMLEAALEAGFSAAGVDVMLAGPVPTPAVAYLTRALRLSAGVVISASHNPYDDNGIKFFSASGNKLADATELEIEAALDVPMSCVASEKLGRVKRLDDARGRYIEFCKSTFPNELDLRGTKIVVDCAHGAAYHIAPDVFHELGAEVVAIGNQPSGFNINDKVGATAPAALVEAVRANQADIGIALDGDADRLIVVDASGRIFTGDEMLYIMVKDRMSVQAVAGAVGTLMTNMALEVAFRKMGIGFVRANVGDRYVLEALQERGWLLGGEGSGHMLFLDKHTTGDGIISALQILSALKRSGKTLAQLTADIAMFPQTLINVKVRPGFDWKKNAGLLAEKEQVEAELGDEGRVLIRASGTEPLIRVMVEAKNGEMADKMARRIAATLTV.

S108 functions as the Phosphoserine intermediate in the catalytic mechanism. The Mg(2+) site is built by S108, D247, D249, and D251. Position 108 is a phosphoserine (S108).

This sequence belongs to the phosphohexose mutase family. The cofactor is Mg(2+). Post-translationally, activated by phosphorylation.

It catalyses the reaction alpha-D-glucosamine 1-phosphate = D-glucosamine 6-phosphate. Functionally, catalyzes the conversion of glucosamine-6-phosphate to glucosamine-1-phosphate. This Herminiimonas arsenicoxydans protein is Phosphoglucosamine mutase.